The primary structure comprises 801 residues: Heavy metal tolerance factor 1 (801 aa).

The Lumenal portion of the chain corresponds to 1–24 (MGFSPFLDECRAEGLWPIGPSCNK). The helical transmembrane segment at 25-45 (IISFGVYTFFIVVNFIVLCIP) threads the bilayer. The Cytoplasmic segment spans residues 46 to 75 (NSNSANNNYRRMTDDDASSTSKLTISKILS). A helical membrane pass occupies residues 76–96 (ICTIFAVICQSIFYFCFTFYF). Residues 97–101 (HPYTH) are Lumenal-facing. The chain crosses the membrane as a helical span at residues 102–122 (LLLAFCVSKLFFWILSLCSFS). The Cytoplasmic segment spans residues 123–129 (KWRNQPS). Residues 130-150 (TPISLAFAFSAALLIHCIPLT) traverse the membrane as a helical segment. At 151–167 (DWKKYFEPTSKNRGDLT) the chain is on the lumenal side. A helical transmembrane segment spans residues 168 to 188 (FYIIELALVTVVFFFTIVTGL). Over 189 to 226 (FNFSGCSSRESAWNNLSKKVVTVAPYIWPTKSISLQLR) the chain is Cytoplasmic. The chain crosses the membrane as a helical span at residues 227 to 247 (VVFCLFLLIIGRLINVSLPIL). In terms of domain architecture, ABC transmembrane type-1 spans 227–516 (VVFCLFLLII…FGTIYRVIQK (290 aa)). Residues 248–264 (SKWIVDELATPDTFQYS) are Lumenal-facing. Residues 265–285 (LLFLATFLKFLQGNGAMGGFL) form a helical membrane-spanning segment. The Cytoplasmic portion of the chain corresponds to 286-341 (NTVRTYLWIPIQQYTTRELEVELFKHLHSLSLRWHLSRKTGQVLRVMDRGTSSVNN). The helical transmembrane segment at 342–364 (ILNYILFNVVPTIADIVIAVIFF) threads the bilayer. Over 365–371 (FSAFNAY) the chain is Lumenal. Residues 372-390 (FGLIVFGTMALYLTVTISI) traverse the membrane as a helical segment. Residues 391 to 461 (TEWRTQYIRE…SLAFLNCLQN (71 aa)) are Cytoplasmic-facing. A helical membrane pass occupies residues 462-482 (AIIGIGMIGGSVFVVYMIVHE). Over 483–489 (KTLTVGD) the chain is Lumenal. Residues 490-510 (YVLFTTYLLQLYTPLNFFGTI) form a helical membrane-spanning segment. Topologically, residues 511–801 (YRVIQKAFVD…KSIELGEELP (291 aa)) are cytoplasmic. One can recognise an ABC transporter domain in the interval 550–784 (ISVKNLTFEY…QGTYASMWEA (235 aa)). 583-590 (GSSGSGKS) contributes to the ATP binding site.

This sequence belongs to the ABC transporter superfamily. ABCB family. Heavy Metal importer (TC 3.A.1.210) subfamily. Expressed in coelomocytes, as well as in head and tail neurons, and in the intestinal cells.

The protein localises to the vacuole membrane. It is found in the early endosome. The protein resides in the late endosome. It localises to the recycling endosome. Functionally, may play a pivotal role in the detoxification of heavy metals such as cadmium but do not depend exclusively on phytochelatins (PC) synthesis. The sequence is that of Heavy metal tolerance factor 1 from Caenorhabditis elegans.